We begin with the raw amino-acid sequence, 191 residues long: Small ribosomal subunit protein eS7z (191 aa).

Position 1 is an N-acetylmethionine (Met1). The stretch at 15–50 (ELSELDEQVAQAFFDLENTNQELKSELKDLYVNSAV) forms a coiled coil.

It belongs to the eukaryotic ribosomal protein eS7 family.

The sequence is that of Small ribosomal subunit protein eS7z (RPS7A) from Arabidopsis thaliana (Mouse-ear cress).